Consider the following 327-residue polypeptide: Pyruvate dehydrogenase E1 component subunit beta (327 aa).

E60 is a thiamine diphosphate binding site. The K(+) site is built by I113, A161, I162, and N166.

In terms of assembly, heterodimer of an alpha and a beta chain. Thiamine diphosphate is required as a cofactor.

The protein localises to the plastid. It is found in the chloroplast. The catalysed reaction is N(6)-[(R)-lipoyl]-L-lysyl-[protein] + pyruvate + H(+) = N(6)-[(R)-S(8)-acetyldihydrolipoyl]-L-lysyl-[protein] + CO2. In terms of biological role, the pyruvate dehydrogenase complex catalyzes the overall conversion of pyruvate to acetyl-CoA and CO(2). It contains multiple copies of three enzymatic components: pyruvate dehydrogenase (E1), dihydrolipoamide acetyltransferase (E2) and lipoamide dehydrogenase (E3). This is Pyruvate dehydrogenase E1 component subunit beta (pdhB) from Mesostigma viride (Green alga).